The chain runs to 222 residues: Coiled-coil domain-containing protein 70 (222 aa).

Coiled-coil stretches lie at residues 34 to 62 and 129 to 188; these read LQEEKAFREEMRHFREKIEDFREEMWNFR and NALW…KAAW.

This Bos taurus (Bovine) protein is Coiled-coil domain-containing protein 70 (CCDC70).